Consider the following 811-residue polypeptide: MNVALQELGAGSNMVEYKRATLRDEDAPETPVEGGASPDAMEVGKGASPFSPGPSPGMTPGTPRSSGLFWRVTCPHLRSISGLCSRTMVGFQKGTRQLLGSRTQLELVLAGASLLLAALLLGCLVALGVQYHRDPSHSTCLTEACIRVAGKILESLDRGVSPCEDFYQFSCGGWIRRNPLPDGRSRWNTFNSLWDQNQAILKHLLENTTFNSSSEAEQKTQRFYLSCLQVERIEELGAQPLRDLIEKIGGWNITGPWDQDNFMEVLKAVAGTYRATPFFTVYISADSKSSNSNVIQVDQSGLFLPSRDYYLNRTANEKVLTAYLDYMEELGMLLGGRPTSTREQMQQVLELEIQLANITVPQDQRRDEEKIYHKMSISELQALAPSMDWLEFLSFLLSPLELSDSEPVVVYGMDYLQQVSELINRTEPSILNNYLIWNLVQKTTSSLDRRFESAQEKLLETLYGTKKSCVPRWQTCISNTDDALGFALGSLFVKATFDRQSKEIAEGMISEIRTAFEEALGQLVWMDEKTRQAAKEKADAIYDMIGFPDFILEPKELDDVYDGYEISEDSFFQNMLNLYNFSAKVMADQLRKPPSRDQWSMTPQTVNAYYLPTKNEIVFPAGILQAPFYARNHPKALNFGGIGVVMGHELTHAFDDQGREYDKEGNLRPWWQNESLAAFRNHTACMEEQYNQYQVNGERLNGRQTLGENIADNGGLKAAYNAYKAWLRKHGEEQQLPAVGLTNHQLFFVGFAQVWCSVRTPESSHEGLVTDPHSPARFRVLGTLSNSRDFLRHFGCPVGSPMNPGQLCEVW.

Residues 1–106 are Cytoplasmic-facing; the sequence is MNVALQELGA…QLLGSRTQLE (106 aa). The interval 22 to 64 is disordered; the sequence is LRDEDAPETPVEGGASPDAMEVGKGASPFSPGPSPGMTPGTPR. The helical; Signal-anchor for type II membrane protein transmembrane segment at 107-127 threads the bilayer; that stretch reads LVLAGASLLLAALLLGCLVAL. The Lumenal portion of the chain corresponds to 128–811; that stretch reads GVQYHRDPSH…MNPGQLCEVW (684 aa). A Peptidase M13 domain is found at 139–811; it reads TCLTEACIRV…MNPGQLCEVW (673 aa). Cystine bridges form between Cys140/Cys145, Cys163/Cys796, Cys171/Cys756, Cys227/Cys476, and Cys685/Cys808. N-linked (GlcNAc...) asparagine glycans are attached at residues Asn207, Asn211, Asn252, Asn312, Asn357, Asn424, and Asn580. Residue His648 coordinates Zn(2+). Glu649 is an active-site residue. Residue His652 participates in Zn(2+) binding. Residues Asn673 and Asn681 are each glycosylated (N-linked (GlcNAc...) asparagine). Glu708 contributes to the Zn(2+) binding site. Asp712 acts as the Proton donor in catalysis.

This sequence belongs to the peptidase M13 family. It depends on Zn(2+) as a cofactor.

It localises to the golgi apparatus membrane. Its subcellular location is the cytoplasmic vesicle. The protein localises to the secretory vesicle membrane. It carries out the reaction Hydrolysis of the 21-Trp-|-Val-22 bond in big endothelin to form endothelin 1.. Converts big endothelin-1 to endothelin-1. Also involved in the processing of various neuroendocrine peptides, including neurotensin, angiotensin I, substance P, proenkephalin-derived peptides, and prodynorphin-derived peptides. May play a role in amyloid-beta processing. This chain is Endothelin-converting enzyme 2, found in Homo sapiens (Human).